Here is a 95-residue protein sequence, read N- to C-terminus: Neurexophilin-3 (95 aa).

Residues asparagine 1 and asparagine 7 are each glycosylated (N-linked (GlcNAc...) asparagine). Positions 1–21 (NATGQGNISISLVPPSKAVEX) are III. Residues 22 to 30 (HQXQQIFIE) are IV (linker domain). Residues 31 to 95 (AKASKIFNCR…YIAFYSTDYR (65 aa)) are v (Cys-rich).

It belongs to the neurexophilin family.

Its subcellular location is the secreted. May be signaling molecules that resemble neuropeptides. Ligand for alpha-neurexins. This chain is Neurexophilin-3 (NXPH3), found in Macaca mulatta (Rhesus macaque).